The following is a 416-amino-acid chain: GTPase Obg (416 aa).

Residues 1 to 157 form the Obg domain; it reads MFQDVLVITV…RRLRLELMLI (157 aa). Disordered stretches follow at residues 25–44 and 62–82; these read EKFV…GGSV and TYKA…RGGE. Positions 32–42 are enriched in gly residues; sequence GPDGGDGGRGG. Over residues 63-72 the composition is skewed to basic and acidic residues; sequence YKAEDGEHGR. The OBG-type G domain maps to 158 to 324; sequence ADVGLVGYPN…LKEALHALVR (167 aa). GTP contacts are provided by residues 164–171, 189–193, 211–214, 277–280, and 305–307; these read GYPNAGKS, FTTLS, DIPG, NKVD, and SAL. 2 residues coordinate Mg(2+): Ser171 and Thr191. One can recognise an OCT domain in the interval 336–414; that stretch reads PRKEVQAGVE…IGGLEFEYIP (79 aa).

It belongs to the TRAFAC class OBG-HflX-like GTPase superfamily. OBG GTPase family. In terms of assembly, monomer. The cofactor is Mg(2+).

The protein resides in the cytoplasm. In terms of biological role, an essential GTPase which binds GTP, GDP and possibly (p)ppGpp with moderate affinity, with high nucleotide exchange rates and a fairly low GTP hydrolysis rate. Plays a role in control of the cell cycle, stress response, ribosome biogenesis and in those bacteria that undergo differentiation, in morphogenesis control. The sequence is that of GTPase Obg from Thermus thermophilus (strain ATCC BAA-163 / DSM 7039 / HB27).